The sequence spans 91 residues: Preprofallaxidin-2 (91 aa).

An N-terminal signal peptide occupies residues 1–22 (MASLKKSLFLVLFLGLVSLSIC). A propeptide spanning residues 23-49 (EKEKRENEGNENEEEEENHEEGSEEKR) is cleaved from the precursor. The segment at 24 to 49 (KEKRENEGNENEEEEENHEEGSEEKR) is disordered. A compositionally biased stretch (acidic residues) spans 31-41 (GNENEEEEENH). L65 is modified (leucine amide). Residues 69–73 (SEEKR) constitute a propeptide that is removed on maturation. A Leucine amide modification is found at L89.

It belongs to the frog skin active peptide (FSAP) family. Dermaseptin subfamily. Expressed by the skin glands.

It localises to the secreted. Functionally, fallaxidin-3.1 shows antibacterial activity against the Gram-positive bacteria E.faecalis (MIC=100 uM) and L.lactis (MIC=100 uM). No antibacterial activity against the Gram-positive bacteria B.cereus, L.innocua, M.luteus, S.epidermidis, S.uberis and S.aureus, or the Gram-negative bacteria E.cloacae and E.coli. Fallaxidin-3.2 shows antibacterial activity against the Gram-positive bacteria E.faecalis (MIC=100 uM) and L.lactis (MIC=500 uM). No antibacterial activity against the Gram-positive bacteria B.cereus, L.innocua, M.luteus, S.epidermidis, S.uberis and S.aureus, or the Gram-negative bacteria E.cloacae and E.coli. In Litoria fallax (Eastern dwarf tree frog), this protein is Preprofallaxidin-2.